Consider the following 150-residue polypeptide: Ribonuclease H (150 aa).

The 142-residue stretch at 2–143 folds into the RNase H type-1 domain; that stretch reads PAPILDIFVD…ADELANRAIE (142 aa). Mg(2+) is bound by residues Asp-11, Glu-49, Asp-71, and Asp-135.

The protein belongs to the RNase H family. In terms of assembly, monomer. Requires Mg(2+) as cofactor.

Its subcellular location is the cytoplasm. The enzyme catalyses Endonucleolytic cleavage to 5'-phosphomonoester.. Functionally, endonuclease that specifically degrades the RNA of RNA-DNA hybrids. In Dichelobacter nodosus (strain VCS1703A), this protein is Ribonuclease H.